The primary structure comprises 553 residues: CDP-diacylglycerol--glycerol-3-phosphate 3-phosphatidyltransferase, mitochondrial (553 aa).

The N-terminal 25 residues, 1 to 25 (MAAPAAGPVFWRRLLGLLPGRPGLA), are a transit peptide targeting the mitochondrion. Position 46 is a phosphoserine (serine 46). 121-128 (ASLYLGTG) contributes to the ATP binding site. 2 PLD phosphodiesterase domains span residues 212–238 (TIGLQHIKVYLFDNNVILSGANLSDSY) and 457–490 (RGWTFHAKGLWLYLAGSSLPCLTLIGSPNFGYRS). Residues histidine 217, lysine 219, and aspartate 224 contribute to the active site.

It belongs to the CDP-alcohol phosphatidyltransferase class-II family. In terms of tissue distribution, widely expressed with higher expression in testis, liver and brain.

Its subcellular location is the mitochondrion. The catalysed reaction is a CDP-1,2-diacyl-sn-glycerol + sn-glycerol 3-phosphate = a 1,2-diacyl-sn-glycero-3-phospho-(1'-sn-glycero-3'-phosphate) + CMP + H(+). It participates in phospholipid metabolism; phosphatidylglycerol biosynthesis; phosphatidylglycerol from CDP-diacylglycerol: step 1/2. With respect to regulation, activated by calcium and magnesium and inhibited by other bivalent cations. Its function is as follows. Functions in the biosynthesis of the anionic phospholipids phosphatidylglycerol and cardiolipin. The sequence is that of CDP-diacylglycerol--glycerol-3-phosphate 3-phosphatidyltransferase, mitochondrial (Pgs1) from Mus musculus (Mouse).